A 302-amino-acid chain; its full sequence is Transcription factor bHLH7 (302 aa).

Residues 124 to 154 (QPMSQPAPPMPHQQSTIRPRVRARRGQATDP) form a disordered region. The bHLH domain maps to 150–199 (QATDPHSIAERLRRERIAERIRSLQELVPTVNKTDRAAMIDEIVDYVKFL).

Homodimer. As to expression, expressed constitutively in roots, leaves, stems and flowers.

It is found in the nucleus. The chain is Transcription factor bHLH7 (BHLH7) from Arabidopsis thaliana (Mouse-ear cress).